Here is a 417-residue protein sequence, read N- to C-terminus: COP9 signalosome complex subunit 7a (417 aa).

Residues 2–179 (EQTKALNALE…EMVQINSVAA (178 aa)) enclose the PCI domain. The segment at 240-417 (DEQKGAVPSS…KRGSKRKLTA (178 aa)) is disordered. Residues 263–290 (RGGGGGGDGAGAGGSFRGSGYSRGGGLS) are compositionally biased toward gly residues. Low complexity-rich tracts occupy residues 291–311 (QGYR…SRQQ), 320–330 (SNQSGTNSLLT), and 343–352 (PSAVSPSAAA). Residues 367 to 379 (METGSGSGSGPLG) are compositionally biased toward gly residues. A compositionally biased stretch (acidic residues) spans 385–405 (DMDDSEEDIDDDTMDLDDEGD).

The protein belongs to the CSN7/EIF3M family. CSN7 subfamily. Component of the COP9 signalosome (CSN) complex.

It localises to the cytoplasm. The protein resides in the nucleus. In terms of biological role, component of the COP9 signalosome (CSN) complex that acts as an regulator of the ubiquitin (Ubl) conjugation pathway by mediating the deneddylation of the cullin subunit of SCF-type E3 ubiquitin-protein ligase complexes. The CSN complex is involved in the regulation of the circadian clock through its control of the stability of the SCF(FWD1) complex. This chain is COP9 signalosome complex subunit 7a (csn-7a), found in Neurospora crassa (strain ATCC 24698 / 74-OR23-1A / CBS 708.71 / DSM 1257 / FGSC 987).